The chain runs to 29 residues: Kappa-sparatoxin-Hv1e (29 aa).

3 cysteine pairs are disulfide-bonded: cysteine 3–cysteine 17, cysteine 10–cysteine 22, and cysteine 16–cysteine 26.

Expressed by the venom gland.

It localises to the secreted. In terms of biological role, inhibitor of voltage-gated potassium channels of the Kv4/KCND family. Blocks calcium channels (Cav). The polypeptide is Kappa-sparatoxin-Hv1e (Heteropoda venatoria (Brown huntsman spider)).